We begin with the raw amino-acid sequence, 357 residues long: Eugenol O-methyltransferase (357 aa).

S-adenosyl-L-methionine contacts are provided by glycine 203, aspartate 226, aspartate 246, methionine 247, and lysine 260. The active-site Proton acceptor is histidine 264.

It belongs to the class I-like SAM-binding methyltransferase superfamily. Cation-independent O-methyltransferase family. COMT subfamily. Specifically expressed in the peltate glandular trichomes on the surface of the young basil leaves.

It carries out the reaction (E)-isoeugenol + S-adenosyl-L-methionine = (E)-isomethyleugenol + S-adenosyl-L-homocysteine + H(+). The protein operates within aromatic compound metabolism; phenylpropanoid biosynthesis. In terms of biological role, phenylpropene O-methyltransferase that catalyzes the methylation of the para-4-hydroxyl of eugenol to methyleugenol. Can also convert chavicol to methylchavicol but with less affinity. This is Eugenol O-methyltransferase (EOMT1) from Ocimum basilicum (Sweet basil).